The sequence spans 506 residues: Maturase K (506 aa).

Belongs to the intron maturase 2 family. MatK subfamily.

Its subcellular location is the plastid. It localises to the chloroplast. Its function is as follows. Usually encoded in the trnK tRNA gene intron. Probably assists in splicing its own and other chloroplast group II introns. The polypeptide is Maturase K (Crataegus monogyna (Hawthorn)).